The chain runs to 240 residues: Pathogenesis-related thaumatin-like protein 3.5 (240 aa).

The first 20 residues, 1–20 (MASLRLATLAMMVLFGSCRA), serve as a signal peptide directing secretion. Cystine bridges form between C31–C237, C79–C89, C94–C100, C145–C227, C150–C210, C158–C173, C177–C186, and C187–C197.

Belongs to the thaumatin family. As to expression, strongly expressed in pollen grains. Also present at weak levels in seedling roots, in sapling stems and in developing male strobili.

In terms of biological role, may be involved in disease resistance. The protein is Pathogenesis-related thaumatin-like protein 3.5 of Cryptomeria japonica (Japanese cedar).